We begin with the raw amino-acid sequence, 396 residues long: Agropine synthesis cyclase (396 aa).

The protein belongs to the peptidase M24B family.

The polypeptide is Agropine synthesis cyclase (ags) (Rhizobium rhizogenes (Agrobacterium rhizogenes)).